Reading from the N-terminus, the 248-residue chain is Ribonuclease PH (248 aa).

Residues arginine 86 and 124 to 126 (GTR) each bind phosphate.

This sequence belongs to the RNase PH family. As to quaternary structure, homohexameric ring arranged as a trimer of dimers.

It catalyses the reaction tRNA(n+1) + phosphate = tRNA(n) + a ribonucleoside 5'-diphosphate. Phosphorolytic 3'-5' exoribonuclease that plays an important role in tRNA 3'-end maturation. Removes nucleotide residues following the 3'-CCA terminus of tRNAs; can also add nucleotides to the ends of RNA molecules by using nucleoside diphosphates as substrates, but this may not be physiologically important. Probably plays a role in initiation of 16S rRNA degradation (leading to ribosome degradation) during starvation. This is Ribonuclease PH from Listeria monocytogenes serotype 4b (strain CLIP80459).